We begin with the raw amino-acid sequence, 172 residues long: Putative B3 domain-containing protein At1g05615 (172 aa).

The TF-B3 DNA-binding region spans 69–169 (VDEGKIIDFE…NLAMVPLTPT (101 aa)).

The protein resides in the nucleus. In Arabidopsis thaliana (Mouse-ear cress), this protein is Putative B3 domain-containing protein At1g05615.